The chain runs to 156 residues: Acyl carrier protein, mitochondrial (156 aa).

Residues 1-68 (MASRVLCACV…GTVTHLCRQY (68 aa)) constitute a mitochondrion transit peptide. Positions 77-152 (DGIKDRVLYV…EIVDYIADKK (76 aa)) constitute a Carrier domain. K88 carries the post-translational modification N6-acetyllysine. Residue S112 is modified to O-(pantetheine 4'-phosphoryl)serine.

It belongs to the acyl carrier protein (ACP) family. Mammalian complex I is composed of 45 different subunits. Interacts with ETFRF1. Identified in a complex composed of MALSU1, MIEF1 upstream open reading frame protein and NDUFAB1; within the trimeric complex, MIEF1 upstream open reading frame protein functions as a bridging scaffold that interacts with MALSU1 on one side, and with NDUFAB1 on the other side. The complex interacts with the mitochondrial large ribosomal subunit. Interacts with alpha-1-microglobulin chain; this interaction is required for the maintenance of mitochondrial redox homeostasis. Component of the mitochondrial core iron-sulfur cluster (ISC) complex composed of NFS1, LYRM4, NDUFAB1, ISCU, FXN, and FDX2; this complex is a heterohexamer containing two copies of each monomer. Component of the cyteine desulfurase complex composed of NFS1, LYRM4 and NDUFAB1; this complex contributes to the stability and cysteine desulfurase activity of NFS1. Post-translationally, phosphopantetheinylation at Ser-112 is essential for interactions with LYR motif-containing proteins.

The protein localises to the mitochondrion. Its function is as follows. Carrier of the growing fatty acid chain in fatty acid biosynthesis. Accessory and non-catalytic subunit of the mitochondrial membrane respiratory chain NADH dehydrogenase (Complex I), which functions in the transfer of electrons from NADH to the respiratory chain. Accessory protein, of the core iron-sulfur cluster (ISC) assembly complex, that regulates, in association with LYRM4, the stability and the cysteine desulfurase activity of NFS1 and participates in the [2Fe-2S] clusters assembly on the scaffolding protein ISCU. The core iron-sulfur cluster (ISC) assembly complex is involved in the de novo synthesis of a [2Fe-2S] cluster, the first step of the mitochondrial iron-sulfur protein biogenesis. This process is initiated by the cysteine desulfurase complex (NFS1:LYRM4:NDUFAB1) that produces persulfide which is delivered on the scaffold protein ISCU in a FXN-dependent manner. Then this complex is stabilized by FDX2 which provides reducing equivalents to accomplish the [2Fe-2S] cluster assembly. Finally, the [2Fe-2S] cluster is transferred from ISCU to chaperone proteins, including HSCB, HSPA9 and GLRX5. This is Acyl carrier protein, mitochondrial from Mus musculus (Mouse).